We begin with the raw amino-acid sequence, 463 residues long: Lactaldehyde dehydrogenase (463 aa).

220-225 (GSSKVG) serves as a coordination point for NAD(+). Residues Glu240 and Cys274 contribute to the active site.

This sequence belongs to the aldehyde dehydrogenase family. In terms of assembly, homotetramer.

It catalyses the reaction (S)-lactaldehyde + NAD(+) + H2O = (S)-lactate + NADH + 2 H(+). It functions in the pathway cofactor biosynthesis; coenzyme F420 biosynthesis. Functionally, involved in F420 biosynthesis through the oxidation of lactaldehyde to lactate. The substrate preference order is propionaldehyde &gt; DL-lactaldehyde, DL-glyceraldehyde &gt; crotonaldehyde &gt; glycolaldehyde &gt; acetaldehyde, acrolein &gt; formaldehyde. No activity was observed towards methylglyoxal or glyceraldehyde-3-phosphate. Has a preference for NAD over NADP. The protein is Lactaldehyde dehydrogenase of Methanocaldococcus jannaschii (strain ATCC 43067 / DSM 2661 / JAL-1 / JCM 10045 / NBRC 100440) (Methanococcus jannaschii).